We begin with the raw amino-acid sequence, 221 residues long: Phosphoribosylformylglycinamidine synthase subunit PurQ (221 aa).

In terms of domain architecture, Glutamine amidotransferase type-1 spans 6–221; that stretch reads VGVVVFPGSN…LFTLKSLILK (216 aa). Cysteine 89 (nucleophile) is an active-site residue. Residues histidine 197 and glutamate 199 contribute to the active site.

As to quaternary structure, part of the FGAM synthase complex composed of 1 PurL, 1 PurQ and 2 PurS subunits.

The protein resides in the cytoplasm. It catalyses the reaction N(2)-formyl-N(1)-(5-phospho-beta-D-ribosyl)glycinamide + L-glutamine + ATP + H2O = 2-formamido-N(1)-(5-O-phospho-beta-D-ribosyl)acetamidine + L-glutamate + ADP + phosphate + H(+). The catalysed reaction is L-glutamine + H2O = L-glutamate + NH4(+). Its pathway is purine metabolism; IMP biosynthesis via de novo pathway; 5-amino-1-(5-phospho-D-ribosyl)imidazole from N(2)-formyl-N(1)-(5-phospho-D-ribosyl)glycinamide: step 1/2. Part of the phosphoribosylformylglycinamidine synthase complex involved in the purines biosynthetic pathway. Catalyzes the ATP-dependent conversion of formylglycinamide ribonucleotide (FGAR) and glutamine to yield formylglycinamidine ribonucleotide (FGAM) and glutamate. The FGAM synthase complex is composed of three subunits. PurQ produces an ammonia molecule by converting glutamine to glutamate. PurL transfers the ammonia molecule to FGAR to form FGAM in an ATP-dependent manner. PurS interacts with PurQ and PurL and is thought to assist in the transfer of the ammonia molecule from PurQ to PurL. This Prochlorococcus marinus (strain MIT 9312) protein is Phosphoribosylformylglycinamidine synthase subunit PurQ.